The following is an 802-amino-acid chain: Penicillin G acylase (802 aa).

An N-terminal signal peptide occupies residues Met1–Glu26. Residue Glu177 participates in Ca(2+) binding. Residues Ser235–Gly265 constitute a propeptide, spacer peptide. Ser266 serves as the catalytic Nucleophile. Ca(2+) is bound at residue Asp341.

The protein belongs to the peptidase S45 family. As to quaternary structure, heterodimer of an alpha subunit and a beta subunit processed from the same precursor. Requires Ca(2+) as cofactor.

Its subcellular location is the secreted. The enzyme catalyses a penicillin + H2O = 6-aminopenicillanate + a carboxylate. The chain is Penicillin G acylase (pac) from Rhizobium viscosum (Arthrobacter viscosus).